Consider the following 42-residue polypeptide: Cytochrome b559 subunit beta (42 aa).

The helical transmembrane segment at 17–33 (WLTIHALAVPTVFFLGA) threads the bilayer. Residue His21 participates in heme binding.

The protein belongs to the PsbE/PsbF family. As to quaternary structure, heterodimer of an alpha subunit and a beta subunit. PSII is composed of 1 copy each of membrane proteins PsbA, PsbB, PsbC, PsbD, PsbE, PsbF, PsbH, PsbI, PsbJ, PsbK, PsbL, PsbM, PsbT, PsbX, PsbY, PsbZ, Psb30/Ycf12, at least 3 peripheral proteins of the oxygen-evolving complex and a large number of cofactors. It forms dimeric complexes. It depends on heme b as a cofactor.

It localises to the plastid. The protein localises to the chloroplast thylakoid membrane. This b-type cytochrome is tightly associated with the reaction center of photosystem II (PSII). PSII is a light-driven water:plastoquinone oxidoreductase that uses light energy to abstract electrons from H(2)O, generating O(2) and a proton gradient subsequently used for ATP formation. It consists of a core antenna complex that captures photons, and an electron transfer chain that converts photonic excitation into a charge separation. The sequence is that of Cytochrome b559 subunit beta from Emiliania huxleyi (Coccolithophore).